The following is a 78-amino-acid chain: Acyl carrier protein (78 aa).

A Carrier domain is found at 2-77; it reads STIEERVKKI…EAIDYVTAHA (76 aa). Serine 37 bears the O-(pantetheine 4'-phosphoryl)serine mark.

The protein belongs to the acyl carrier protein (ACP) family. Post-translationally, 4'-phosphopantetheine is transferred from CoA to a specific serine of apo-ACP by AcpS. This modification is essential for activity because fatty acids are bound in thioester linkage to the sulfhydryl of the prosthetic group.

The protein localises to the cytoplasm. It participates in lipid metabolism; fatty acid biosynthesis. Carrier of the growing fatty acid chain in fatty acid biosynthesis. This is Acyl carrier protein from Ectopseudomonas mendocina (strain ymp) (Pseudomonas mendocina).